The sequence spans 488 residues: Prostaglandin E2 receptor EP4 subtype (488 aa).

Over 1–19 (MSIPGVNASFSSTPERLNS) the chain is Extracellular. Asn7 is a glycosylation site (N-linked (GlcNAc...) asparagine). Residues 20 to 43 (PVTIPAVMFIFGVVGNLVAIVVLC) traverse the membrane as a helical segment. The Cytoplasmic portion of the chain corresponds to 44 to 55 (KSRKEQKETTFY). Residues 56 to 79 (TLVCGLAVTDLLGTLLVSPVTIAT) form a helical membrane-spanning segment. At 80–96 (YMKGQWPGDQALCDYST) the chain is on the extracellular side. An intrachain disulfide couples Cys92 to Cys170. Residues 97 to 115 (FILLFFGLSGLSIICAMSI) traverse the membrane as a helical segment. Over 116-135 (ERYLAINHAYFYSHYVDKRL) the chain is Cytoplasmic. A helical membrane pass occupies residues 136 to 160 (AGLTLFAVYASNVLFCALPNMGLGR). At 161–184 (SERQYPGTWCFIDWTTNVTAYAAF) the chain is on the extracellular side. A helical membrane pass occupies residues 185-211 (SYMYAGFSSFLILATVLCNVLVCGALL). The Cytoplasmic portion of the chain corresponds to 212 to 270 (RMLRQFMRRTSLGTEQHHAAAAAAVASVACRGHAAASPALQRLSDFRRRRSFRRIAGAE). The helical transmembrane segment at 271 to 298 (IQMVILLIATSLVVLICSIPLVVRVFIN) threads the bilayer. Residues 299-315 (QLYQPSVVKDISRNPDL) are Extracellular-facing. Residues 316-335 (QAIRIASVNPILDPWIYILL) form a helical membrane-spanning segment. Residues 336–488 (RKTVLSKAIE…ETLKLSEKCI (153 aa)) lie on the Cytoplasmic side of the membrane. The tract at residues 358-380 (GRDGSAQHCSESRRTSSAMSGHS) is disordered. Phosphoserine occurs at positions 377, 380, 382, and 385.

Belongs to the G-protein coupled receptor 1 family. Interacts with FEM1A. Post-translationally, phosphorylation mediates agonist-mediated desensitization by promoting cytoplasmic retention.

It is found in the cell membrane. Receptor for prostaglandin E2 (PGE2). The activity of this receptor is mediated by G(s) proteins that stimulate adenylate cyclase. Has a relaxing effect on smooth muscle. May play an important role in regulating renal hemodynamics, intestinal epithelial transport, adrenal aldosterone secretion, and uterine function. This chain is Prostaglandin E2 receptor EP4 subtype (Ptger4), found in Rattus norvegicus (Rat).